The chain runs to 697 residues: Sentrin-specific protease (697 aa).

Residues 1–14 (MSRRSDLSDKDSQS) are compositionally biased toward basic and acidic residues. 2 disordered regions span residues 1 to 47 (MSRR…QGLG) and 365 to 387 (SEES…SDSY). The Nuclear localization signal signature appears at 15–19 (RKRHW). The short motif at 462–467 (KVEKKK) is the Nuclear localization signal element. The protease stretch occupies residues 501-664 (IQICKKDLAT…VFSCQFGEWA (164 aa)). Active-site residues include His-585, Asp-602, and Cys-653.

It belongs to the peptidase C48 family.

Its subcellular location is the nucleus envelope. In terms of biological role, protease that deconjugates smo-1 from targeted proteins and may catalyze the processing of smo-1 to its mature form. This is Sentrin-specific protease (ulp-1) from Caenorhabditis elegans.